Consider the following 110-residue polypeptide: Thioredoxin (110 aa).

Positions 3–108 (KPIEVHDSDF…YREIFDKVLA (106 aa)) constitute a Thioredoxin domain. An intrachain disulfide couples Cys32 to Cys35. An N6,N6-dimethyllysine; alternate modification is found at Lys105. N6-methyllysine; alternate is present on Lys105.

Participates in various redox reactions through the reversible oxidation of its active center dithiol to a disulfide and catalyzes dithiol-disulfide exchange reactions. The protein is Thioredoxin (trxA) of Chloroflexus aurantiacus (strain ATCC 29366 / DSM 635 / J-10-fl).